We begin with the raw amino-acid sequence, 1127 residues long: Inactive phospholipase C-like protein 2 (1127 aa).

The segment covering 1–11 has biased composition (gly residues); the sequence is MAECGRGGAAG. The tract at residues 1 to 128 is disordered; it reads MAECGRGGAA…KKTVSFSSMP (128 aa). Alanine 2 bears the N-acetylalanine mark. Serine 17 is subject to Phosphoserine. A compositionally biased stretch (low complexity) spans 19–31; the sequence is GPALGAKGALKAG. Over residues 32–42 the composition is skewed to gly residues; the sequence is VGEGGGGGGRL. Residue threonine 84 is modified to Phosphothreonine. Residues 141 to 251 form the PH domain; the sequence is NSMVEGSELK…WVTGLRYLIS (111 aa). A PI-PLC X-box domain is found at 426–570; sequence QDMKQPLSHY…LKGKILIKAK (145 aa). A Phosphothreonine modification is found at threonine 584. A PI-PLC Y-box domain is found at 618-734; sequence LSELVSICKS…GYVLRPAIMR (117 aa). In terms of domain architecture, C2 spans 734–863; it reads REEVSFFSAN…TGYRHVPLQS (130 aa). The tract at residues 1101 to 1127 is disordered; it reads GTENADVQKPRRSLEVIPEKANDETGE. Positions 1106 to 1127 are enriched in basic and acidic residues; sequence DVQKPRRSLEVIPEKANDETGE. Phosphoserine is present on serine 1113.

Its subcellular location is the cytoplasm. Functionally, may play an role in the regulation of Ins(1,4,5)P3 around the endoplasmic reticulum. The sequence is that of Inactive phospholipase C-like protein 2 (PLCL2) from Homo sapiens (Human).